The sequence spans 834 residues: Mannosyl-oligosaccharide glucosidase (834 aa).

The span at 1–10 (MARGERRRRA) shows a compositional bias: basic residues. The segment at 1 to 37 (MARGERRRRAAAAEGARPLERARAAGRRDGRAGGARG) is disordered. Residues 1-43 (MARGERRRRAAAAEGARPLERARAAGRRDGRAGGARGSASGAA) lie on the Cytoplasmic side of the membrane. The Endoplasmic reticulum targeting signature appears at 3–9 (RGERRRR). Basic and acidic residues predominate over residues 17–31 (RPLERARAAGRRDGR). The helical; Signal-anchor for type II membrane protein transmembrane segment at 44–64 (LAVVVLALAFGLSGRWVLAWL) threads the bilayer. Topologically, residues 65–834 (RVRRALTLHP…LVLLIMAEEY (770 aa)) are lumenal. The tract at residues 74–136 (PAPSALPPDS…GTPPKLRHTC (63 aa)) is required for endoplasmic reticulum targeting. D580 functions as the Proton donor in the catalytic mechanism. A glycan (N-linked (GlcNAc...) asparagine) is linked at N654. E804 serves as the catalytic Proton acceptor.

The protein belongs to the glycosyl hydrolase 63 family.

Its subcellular location is the endoplasmic reticulum membrane. The enzyme catalyses N(4)-(alpha-D-Glc-(1-&gt;2)-alpha-D-Glc-(1-&gt;3)-alpha-D-Glc-(1-&gt;3)-alpha-D-Man-(1-&gt;2)-alpha-D-Man-(1-&gt;2)-alpha-D-Man-(1-&gt;3)-[alpha-D-Man-(1-&gt;2)-alpha-D-Man-(1-&gt;3)-[alpha-D-Man-(1-&gt;2)-alpha-D-Man-(1-&gt;6)]-alpha-D-Man-(1-&gt;6)]-beta-D-Man-(1-&gt;4)-beta-D-GlcNAc-(1-&gt;4)-beta-D-GlcNAc)-L-asparaginyl-[protein] + H2O = N(4)-(alpha-D-Glc-(1-&gt;3)-alpha-D-Glc-(1-&gt;3)-alpha-D-Man-(1-&gt;2)-alpha-D-Man-(1-&gt;2)-alpha-D-Man-(1-&gt;3)-[alpha-D-Man-(1-&gt;2)-alpha-D-Man-(1-&gt;3)-[alpha-D-Man-(1-&gt;2)-alpha-D-Man-(1-&gt;6)]-alpha-D-Man-(1-&gt;6)]-beta-D-Man-(1-&gt;4)-beta-D-GlcNAc-(1-&gt;4)-beta-D-GlcNAc)-L-asparaginyl-[protein] + beta-D-glucose. The protein operates within glycan metabolism; N-glycan degradation. Its activity is regulated as follows. Inhibited by the deoxynojirimycin derivative N-9'-Methoxynonyl-1-Deoxynojirimycin. Functionally, in the context of N-glycan degradation, cleaves the distal alpha 1,2-linked glucose residue from the Glc(3)Man(9)GlcNAc(2) oligosaccharide precursor in a highly specific manner. In terms of biological role, (Microbial infection) Required for successful influenza or dengue virus infection; inhibition of its activity by a deoxynojirimycin derivative prevents death in mice infected with lethal doses of influenza or dengue viruses, even when administrated after infection. In Mus musculus (Mouse), this protein is Mannosyl-oligosaccharide glucosidase.